Consider the following 174-residue polypeptide: Gamma-crystallin E (174 aa).

2 consecutive Beta/gamma crystallin 'Greek key' domains span residues 2–40 (GKIT…RVDS) and 41–83 (GCWM…RLIP). Residues 84 to 87 (HSSS) form a connecting peptide region. 2 Beta/gamma crystallin 'Greek key' domains span residues 88–128 (HRIK…HVME) and 129–171 (GYWV…RRIM).

Belongs to the beta/gamma-crystallin family. In terms of tissue distribution, detected in the superior olivary complex of the auditory hindbrain.

Functionally, crystallins are the dominant structural components of the vertebrate eye lens. This Mus musculus (Mouse) protein is Gamma-crystallin E (Cryge).